A 435-amino-acid polypeptide reads, in one-letter code: Methionine aminopeptidase 2 (435 aa).

The disordered stretch occupies residues 57 to 77 (AIDGDQAAAKKKKSKKKKKKA). The span at 65–77 (AKKKKSKKKKKKA) shows a compositional bias: basic residues. His188 contributes to the substrate binding site. A divalent metal cation-binding residues include Asp208, Asp219, and His288. His296 lines the substrate pocket. Positions 321 and 416 each coordinate a divalent metal cation.

This sequence belongs to the peptidase M24A family. Methionine aminopeptidase eukaryotic type 2 subfamily. Co(2+) is required as a cofactor. The cofactor is Zn(2+). It depends on Mn(2+) as a cofactor. Requires Fe(2+) as cofactor.

Its subcellular location is the cytoplasm. The enzyme catalyses Release of N-terminal amino acids, preferentially methionine, from peptides and arylamides.. Its function is as follows. Cotranslationally removes the N-terminal methionine from nascent proteins. The N-terminal methionine is often cleaved when the second residue in the primary sequence is small and uncharged (Met-Ala-, Cys, Gly, Pro, Ser, Thr, or Val). In Clavispora lusitaniae (strain ATCC 42720) (Yeast), this protein is Methionine aminopeptidase 2.